We begin with the raw amino-acid sequence, 444 residues long: N-succinylarginine dihydrolase (444 aa).

Residues 19–28, Asn110, and 137–138 each bind substrate; these read AGLSFGNVAS and HR. Residue Glu174 is part of the active site. Position 214 (Arg214) interacts with substrate. His250 is an active-site residue. Positions 252 and 362 each coordinate substrate. The active-site Nucleophile is Cys368.

The protein belongs to the succinylarginine dihydrolase family. In terms of assembly, homodimer.

It catalyses the reaction N(2)-succinyl-L-arginine + 2 H2O + 2 H(+) = N(2)-succinyl-L-ornithine + 2 NH4(+) + CO2. It functions in the pathway amino-acid degradation; L-arginine degradation via AST pathway; L-glutamate and succinate from L-arginine: step 2/5. Functionally, catalyzes the hydrolysis of N(2)-succinylarginine into N(2)-succinylornithine, ammonia and CO(2). The protein is N-succinylarginine dihydrolase of Shewanella baltica (strain OS155 / ATCC BAA-1091).